Reading from the N-terminus, the 522-residue chain is Putative lipase ATG15 (522 aa).

Residues Met-1 to Gly-5 are Cytoplasmic-facing. The helical; Signal-anchor for type II membrane protein transmembrane segment at Pro-6–Ser-26 threads the bilayer. At Ser-27–Asn-522 the chain is on the lumenal side. Asn-48, Asn-133, Asn-196, Asn-220, Asn-302, and Asn-309 each carry an N-linked (GlcNAc...) asparagine glycan. Ser-318 functions as the Charge relay system in the catalytic mechanism. Asn-361 carries an N-linked (GlcNAc...) asparagine glycan. The tract at residues Arg-481 to Ser-506 is disordered.

The protein belongs to the AB hydrolase superfamily. Lipase family. Binds to both phosphatidylinositol (PI) and phosphatidylinositol 3,5-bisphosphate (PIP2).

The protein localises to the endoplasmic reticulum membrane. It localises to the golgi apparatus membrane. It is found in the endosome. Its subcellular location is the multivesicular body membrane. The protein resides in the prevacuolar compartment membrane. It carries out the reaction a triacylglycerol + H2O = a diacylglycerol + a fatty acid + H(+). Its function is as follows. Lipase which is essential for lysis of subvacuolar cytoplasm to vacuole targeted bodies and intravacuolar autophagic bodies. Involved in the lysis of intravacuolar multivesicular body (MVB) vesicles. The intravacuolar membrane disintegration by ATG15 is critical to life span extension. This Cryptococcus neoformans var. neoformans serotype D (strain JEC21 / ATCC MYA-565) (Filobasidiella neoformans) protein is Putative lipase ATG15 (ATG15).